A 125-amino-acid polypeptide reads, in one-letter code: Phosphoribosyl-AMP cyclohydrolase (125 aa).

A Mg(2+)-binding site is contributed by Asp-74. Cys-75 serves as a coordination point for Zn(2+). Mg(2+) is bound by residues Asp-76 and Asp-78. Positions 92 and 99 each coordinate Zn(2+).

The protein belongs to the PRA-CH family. Homodimer. Mg(2+) serves as cofactor. The cofactor is Zn(2+).

It localises to the cytoplasm. It carries out the reaction 1-(5-phospho-beta-D-ribosyl)-5'-AMP + H2O = 1-(5-phospho-beta-D-ribosyl)-5-[(5-phospho-beta-D-ribosylamino)methylideneamino]imidazole-4-carboxamide. The protein operates within amino-acid biosynthesis; L-histidine biosynthesis; L-histidine from 5-phospho-alpha-D-ribose 1-diphosphate: step 3/9. Its function is as follows. Catalyzes the hydrolysis of the adenine ring of phosphoribosyl-AMP. The sequence is that of Phosphoribosyl-AMP cyclohydrolase from Geobacter metallireducens (strain ATCC 53774 / DSM 7210 / GS-15).